Here is an 88-residue protein sequence, read N- to C-terminus: uncharacterized protein (88 aa).

This sequence belongs to the phD/YefM antitoxin family.

This is an uncharacterized protein from Sinorhizobium fredii (strain NBRC 101917 / NGR234).